A 180-amino-acid chain; its full sequence is Large ribosomal subunit protein uL6 (180 aa).

This sequence belongs to the universal ribosomal protein uL6 family. In terms of assembly, part of the 50S ribosomal subunit.

This protein binds to the 23S rRNA, and is important in its secondary structure. It is located near the subunit interface in the base of the L7/L12 stalk, and near the tRNA binding site of the peptidyltransferase center. The chain is Large ribosomal subunit protein uL6 from Clostridium botulinum (strain Langeland / NCTC 10281 / Type F).